Here is a 130-residue protein sequence, read N- to C-terminus: Small ribosomal subunit protein uS11 (130 aa).

This sequence belongs to the universal ribosomal protein uS11 family. Part of the 30S ribosomal subunit. Interacts with proteins S7 and S18. Binds to IF-3.

Functionally, located on the platform of the 30S subunit, it bridges several disparate RNA helices of the 16S rRNA. Forms part of the Shine-Dalgarno cleft in the 70S ribosome. This Prochlorococcus marinus (strain MIT 9215) protein is Small ribosomal subunit protein uS11.